The primary structure comprises 548 residues: Tripartite motif-containing protein 55 (548 aa).

The RING-type zinc finger occupies 10–66 (FSKEQQTMDNLEKQLICPICLEMFTKPVVILPCQHNLCRKCASDIFQASNPYLPTRG). Residues 103 to 145 (NIIDIYKQESTRPEKKSDQPMCEEHEEERINIYCLNCEVPTCS) form a B box-type zinc finger. Cysteine 124, histidine 127, cysteine 147, and histidine 153 together coordinate Zn(2+). The stretch at 168 to 248 (QKSELSDGIA…EKLEHVRALI (81 aa)) forms a coiled coil. The 59-residue stretch at 269 to 327 (MDEPEMAVFLQNAKTLLKKISEASKAFQMEKIEHGYENMNHFTVNLNREEKIIREIDFY) folds into the COS domain. The interval 326-532 (FYREDEDEEE…PASGSGADSE (207 aa)) is disordered. 2 stretches are compositionally biased toward acidic residues: residues 328-339 (REDEDEEEEEGG) and 347-360 (GEVGGEAVEVEEVE). Low complexity-rich tracts occupy residues 484–496 (VAAAAASERAAVS) and 512–531 (EAPPLQGQAAAPASGSGADS).

As to quaternary structure, homooligomer and heterooligomer. Interacts with titin/TTN. Interacts with myosins. Interacts with SQSTM1 and NBR1. Isoform 4 may not able to interact with isoform 1, isoform 2 and isoform 3. Probably interacts with TRIM63 and TRIM54. Post-translationally, targeted for degradation through the proteasomal and lysosomal pathways in the presence of SUMO3. As to expression, highly expressed in muscle. Low-level expression in liver.

It localises to the nucleus. Its subcellular location is the cytoplasm. It carries out the reaction S-ubiquitinyl-[E2 ubiquitin-conjugating enzyme]-L-cysteine + [acceptor protein]-L-lysine = [E2 ubiquitin-conjugating enzyme]-L-cysteine + N(6)-ubiquitinyl-[acceptor protein]-L-lysine.. In terms of biological role, E3 ubiquitin ligase that plays an important role in regulating cardiac development and contractility, muscle growth, metabolism, and fiber-type differentiation. Acts as a critical factor that regulates cardiomyocyte size during development in concert with TRIM63 by regulating E2F1-mediated gene expression. Plays a role in apoptosis induction in cardiomyocytes by promoting ubiquitination of the DUSP1 phosphatase. Promotes non-canonical NF-kappa-B signaling and B-cell-mediated immune responses by mediating NFKB2 'Lys-48'-linked ubiquitination and processing. In turn, NFKB2 is further processed by valosin-containing protein/VCP, an ATPase that mediates ubiquitin-dependent protein degradation by the proteasome. May play a role in preventing macrophages from producing inflammatory factors and migrating by downregulating the level of nuclear NF-kappa-B subunit RELA. Also modifies PPARG via polyubiquitination and accelerates PPARG proteasomal degradation to inhibit its activity. The chain is Tripartite motif-containing protein 55 (TRIM55) from Homo sapiens (Human).